The chain runs to 136 residues: Large ribosomal subunit protein uL16 (136 aa).

The protein belongs to the universal ribosomal protein uL16 family. In terms of assembly, part of the 50S ribosomal subunit.

Functionally, binds 23S rRNA and is also seen to make contacts with the A and possibly P site tRNAs. The chain is Large ribosomal subunit protein uL16 from Buchnera aphidicola subsp. Cinara cedri (strain Cc).